A 159-amino-acid chain; its full sequence is Phosphopantetheine adenylyltransferase (159 aa).

Substrate is bound at residue Ser-8. Residues 8-9 (SF) and His-16 contribute to the ATP site. Substrate contacts are provided by Lys-40, Thr-72, and Arg-86. Residues 87-89 (GLR), Glu-97, and 122-128 (HSFVSSS) each bind ATP.

Belongs to the bacterial CoaD family. Homohexamer. It depends on Mg(2+) as a cofactor.

The protein resides in the cytoplasm. It carries out the reaction (R)-4'-phosphopantetheine + ATP + H(+) = 3'-dephospho-CoA + diphosphate. It participates in cofactor biosynthesis; coenzyme A biosynthesis; CoA from (R)-pantothenate: step 4/5. In terms of biological role, reversibly transfers an adenylyl group from ATP to 4'-phosphopantetheine, yielding dephospho-CoA (dPCoA) and pyrophosphate. The polypeptide is Phosphopantetheine adenylyltransferase (Synechococcus sp. (strain JA-2-3B'a(2-13)) (Cyanobacteria bacterium Yellowstone B-Prime)).